Here is a 315-residue protein sequence, read N- to C-terminus: Porphobilinogen deaminase (315 aa).

Position 245 is an S-(dipyrrolylmethanemethyl)cysteine (C245).

Belongs to the HMBS family. In terms of assembly, monomer. Dipyrromethane serves as cofactor.

The enzyme catalyses 4 porphobilinogen + H2O = hydroxymethylbilane + 4 NH4(+). The protein operates within porphyrin-containing compound metabolism; protoporphyrin-IX biosynthesis; coproporphyrinogen-III from 5-aminolevulinate: step 2/4. It participates in porphyrin-containing compound metabolism; chlorophyll biosynthesis. Functionally, tetrapolymerization of the monopyrrole PBG into the hydroxymethylbilane pre-uroporphyrinogen in several discrete steps. The protein is Porphobilinogen deaminase of Prochlorococcus marinus (strain NATL2A).